Reading from the N-terminus, the 251-residue chain is Small ribosomal subunit protein uS3 (251 aa).

The region spanning 22-93 is the KH type-2 domain; that stretch reads LNEFFTRELA…GIAIYAERVE (72 aa). The disordered stretch occupies residues 223–251; it reads TVKSYKQTAEDETETDAPVEAEAEVEATA. Over residues 232 to 251 the composition is skewed to acidic residues; that stretch reads EDETETDAPVEAEAEVEATA.

Belongs to the universal ribosomal protein uS3 family. Component of the small ribosomal subunit. Mature ribosomes consist of a small (40S) and a large (60S) subunit. The 40S subunit contains about 32 different proteins and 1 molecule of RNA (18S). The 60S subunit contains 45 different proteins and 3 molecules of RNA (25S, 5.8S and 5S).

The protein localises to the cytoplasm. Its function is as follows. Component of the ribosome, a large ribonucleoprotein complex responsible for the synthesis of proteins in the cell. The small ribosomal subunit (SSU) binds messenger RNAs (mRNAs) and translates the encoded message by selecting cognate aminoacyl-transfer RNA (tRNA) molecules. The large subunit (LSU) contains the ribosomal catalytic site termed the peptidyl transferase center (PTC), which catalyzes the formation of peptide bonds, thereby polymerizing the amino acids delivered by tRNAs into a polypeptide chain. The nascent polypeptides leave the ribosome through a tunnel in the LSU and interact with protein factors that function in enzymatic processing, targeting, and the membrane insertion of nascent chains at the exit of the ribosomal tunnel. This Candida albicans (strain SC5314 / ATCC MYA-2876) (Yeast) protein is Small ribosomal subunit protein uS3 (RPS3).